We begin with the raw amino-acid sequence, 538 residues long: Fusion glycoprotein F0 (538 aa).

A signal peptide spans 1-19 (MKAFPVICLGFAIFSSSIC). The Extracellular portion of the chain corresponds to 20–486 (VNINILQQIG…VSVSSKIGAI (467 aa)). Asn56, Asn73, and Asn89 each carry an N-linked (GlcNAc...) asparagine; by host glycan. A fusion peptide region spans residues 103–127 (FAGIAIGIAALGVATAAQVTAAVSL). Positions 128-156 (VQAQTNARAIAAMKNSIQATNRAVFEVKE) form a coiled coil. N-linked (GlcNAc...) asparagine; by host glycosylation occurs at Asn182. Disulfide bonds link Cys324–Cys333, Cys348–Cys356, Cys380–Cys385, and Cys387–Cys410. An N-linked (GlcNAc...) asparagine; by host glycan is attached at Asn352. Residues Asn427, Asn433, and Asn457 are each glycosylated (N-linked (GlcNAc...) asparagine; by host). Positions 452–477 (ELSKVNASLQNAVKYIKESNHQLQSV) form a coiled coil. A helical transmembrane segment spans residues 487–507 (IVAALVLSILSIIISLLFCFW). The Cytoplasmic segment spans residues 508–538 (AYIATKEIRRINFKTNHINTISSSVDDLIRY).

This sequence belongs to the paramyxoviruses fusion glycoprotein family. In terms of assembly, homotrimer; disulfide-linked F1-F2. Interacts with host LAMP1; LAMP2 and LAMP3; these interactions promote the cleavage of the viral fusion protein F. In terms of processing, the inactive precursor F0 is glycosylated and proteolytically cleaved into F1 and F2 to be functionally active. The cleavage is mediated by cellular proteases including host FURIN during the transport and maturation of the polypeptide.

The protein localises to the virion membrane. The protein resides in the host cell membrane. Its function is as follows. Class I viral fusion protein. Under the current model, the protein has at least 3 conformational states: pre-fusion native state, pre-hairpin intermediate state, and post-fusion hairpin state. During viral and plasma cell membrane fusion, the heptad repeat (HR) regions assume a trimer-of-hairpins structure, positioning the fusion peptide in close proximity to the C-terminal region of the ectodomain. The formation of this structure appears to drive apposition and subsequent fusion of viral and plasma cell membranes. Directs fusion of viral and cellular membranes leading to delivery of the nucleocapsid into the cytoplasm. This fusion is pH independent and occurs directly at the outer cell membrane. The trimer of F1-F2 (F protein) probably interacts with HN at the virion surface. Upon HN binding to its cellular receptor, the hydrophobic fusion peptide is unmasked and interacts with the cellular membrane, inducing the fusion between cell and virion membranes. Later in infection, F proteins expressed at the plasma membrane of infected cells could mediate fusion with adjacent cells to form syncytia, a cytopathic effect that could lead to tissue necrosis. This is Fusion glycoprotein F0 (F) from Homo sapiens (Human).